Here is a 99-residue protein sequence, read N- to C-terminus: Small ribosomal subunit protein bS20 (99 aa).

The protein belongs to the bacterial ribosomal protein bS20 family.

Binds directly to 16S ribosomal RNA. This chain is Small ribosomal subunit protein bS20, found in Chlamydia pneumoniae (Chlamydophila pneumoniae).